A 519-amino-acid chain; its full sequence is Transmembrane protein 180 (519 aa).

Residues 1–11 lie on the Extracellular side of the membrane; the sequence is MGLDWPQAWLL. Residues 12–43 form a helical membrane-spanning segment; that stretch reads GLPIAVVYGSLALFTSILHNVFLLYYVDTFVS. The Cytoplasmic portion of the chain corresponds to 44–55; sequence VYKINKVSFWVG. Residues 56–74 traverse the membrane as a helical segment; sequence ETVFLLWNSFNDPLFGWLS. The Extracellular portion of the chain corresponds to 75 to 100; the sequence is DRQLLSSQPRSGAGLSSRDVVLTRVR. The chain crosses the membrane as a helical span at residues 101 to 118; sequence ALGWHGPLLALSFLAFWV. Over 119–126 the chain is Cytoplasmic; the sequence is PWAPAGLQ. The helical transmembrane segment at 127–151 threads the bilayer; sequence FLLCLCLYDGFLTLVDLHHHALLAD. Residues 152 to 155 are Extracellular-facing; it reads LALS. A helical transmembrane segment spans residues 156-179; sequence SHDRTHLNFYCSLFSAAGSLSVFA. Over 180–191 the chain is Cytoplasmic; that stretch reads SYAFWNKEDFSS. A helical transmembrane segment spans residues 192–223; it reads FRAFCVVLAAGSGLGFLGTTQLLKRQIEATRR. The Extracellular segment spans residues 224–264; it reads DRGCPGLDLDGGVCEEEPPVGGEEAGNITLGQYLRQLARHQ. A glycan (N-linked (GlcNAc...) asparagine) is linked at Asn250. The helical transmembrane segment at 265-292 threads the bilayer; sequence NFLWFVGMDLVQVFHCHFNSNFFPLFLE. Residues 293-305 lie on the Cytoplasmic side of the membrane; the sequence is HLLSDHISLSTGS. The helical transmembrane segment at 306–325 threads the bilayer; it reads FLLGISYVAPHLNNLYFLPL. At 326-330 the chain is on the extracellular side; that stretch reads CRRWG. A helical transmembrane segment spans residues 331–350; the sequence is VYAVVRGLFLLKLSLSLLML. Residues 351-358 lie on the Cytoplasmic side of the membrane; it reads LAGPDHPG. Residues 359 to 393 traverse the membrane as a helical segment; sequence LLCFFIASNRVFTEGTCKLLTLVVTDLVDEDLVLN. Over 394-402 the chain is Extracellular; it reads HRKQAASAL. Residues 403–429 form a helical membrane-spanning segment; it reads LFGMVALVTKPGQTFAPLLGTWLLCFY. Residues 430–468 lie on the Cytoplasmic side of the membrane; that stretch reads TGHDLFQQSPMTPVGSVRPWPELPAPAPAPAQAPTLRQG. The chain crosses the membrane as a helical span at residues 469–487; that stretch reads CFYLLVFVPITCALLQLFT. Over 488 to 519 the chain is Extracellular; sequence WSQFTLHGRRLRTVKAQRQNLAQIHTLNIKMV.

The protein localises to the cell membrane. The protein is Transmembrane protein 180 of Mus musculus (Mouse).